We begin with the raw amino-acid sequence, 90 residues long: MSVKIRLTRMGSKKKPFYRINVADSRAPRDGKFIETVGTYNPLLTENQVTLKEERVLEWLSNGAQPSDTVRNLLSKAGVMKKFHESKLSK.

The protein belongs to the bacterial ribosomal protein bS16 family.

This Lactococcus lactis subsp. cremoris (strain SK11) protein is Small ribosomal subunit protein bS16.